A 369-amino-acid polypeptide reads, in one-letter code: Small ribosomal subunit biogenesis GTPase RsgA (369 aa).

A CP-type G domain is found at 88 to 246 (RTVLERPPVA…LADTPGFNQP (159 aa)). GTP is bound by residues 137 to 140 (NKQD) and 188 to 196 (GPSGVGKSS). Residues Cys-271, Cys-276, His-278, and Cys-284 each coordinate Zn(2+). Residues 307 to 369 (QNPENSRETD…DLDNLQEDWE (63 aa)) are disordered. The span at 359–369 (TDLDNLQEDWE) shows a compositional bias: acidic residues.

Belongs to the TRAFAC class YlqF/YawG GTPase family. RsgA subfamily. As to quaternary structure, monomer. Associates with 30S ribosomal subunit, binds 16S rRNA. It depends on Zn(2+) as a cofactor.

The protein resides in the cytoplasm. In terms of biological role, one of several proteins that assist in the late maturation steps of the functional core of the 30S ribosomal subunit. Helps release RbfA from mature subunits. May play a role in the assembly of ribosomal proteins into the subunit. Circularly permuted GTPase that catalyzes slow GTP hydrolysis, GTPase activity is stimulated by the 30S ribosomal subunit. This is Small ribosomal subunit biogenesis GTPase RsgA from Synechocystis sp. (strain ATCC 27184 / PCC 6803 / Kazusa).